Reading from the N-terminus, the 1085-residue chain is DNA polymerase (1085 aa).

The tract at residues 1059–1085 (YDQKRPNPRPQEPLLENPFWDDSSQTA) is disordered.

It belongs to the DNA polymerase type-B family. Heterodimer with the terminal protein; this heterodimer binds to bp 9 to 18 of the genome. Forms a complex with viral pTP, DBP and hosts NFIA and POU2F1/OCT1 for initiation of replication.

Its subcellular location is the host nucleus. The enzyme catalyses DNA(n) + a 2'-deoxyribonucleoside 5'-triphosphate = DNA(n+1) + diphosphate. Its function is as follows. Eukaryotic-type DNA polymerase involved in viral genomic replication. DNA synthesis is protein primed, and acts in a strand displacement replication. Eukaryotic-type DNA polymerase involved in viral genomic replication. DNA synthesis is protein primed, and acts in a strand displacement replication. Assembles in complex with viral pTP, DBP, host NFIA and host POU2F1/OCT1 on viral origin of replication. The polymerase covalently transfers dCMP onto pTP, thereby initiating complementary strand synthesis. The chain is DNA polymerase from Pantherophis guttatus (Corn snake).